We begin with the raw amino-acid sequence, 1121 residues long: Phytochrome 2 (1121 aa).

In terms of domain architecture, GAF spans 214 to 393; sequence DIGLLCDTVV…VFGMQLNMEV (180 aa). Cys-319 is a binding site for phytochromobilin. 2 PAS domains span residues 608–679 and 742–813; these read VANE…SQGE and DYKT…TKFM. The region spanning 893 to 1113 is the Histidine kinase domain; it reads YIRQEIKNPL…VVYVELPMAQ (221 aa).

It belongs to the phytochrome family. As to quaternary structure, homodimer. In terms of processing, contains one covalently linked phytochromobilin chromophore.

Functionally, regulatory photoreceptor which exists in two forms that are reversibly interconvertible by light: the Pr form that absorbs maximally in the red region of the spectrum and the Pfr form that absorbs maximally in the far-red region. Photoconversion of Pr to Pfr induces an array of morphogenic responses, whereas reconversion of Pfr to Pr cancels the induction of those responses. Pfr controls the expression of a number of nuclear genes including those encoding the small subunit of ribulose-bisphosphate carboxylase, chlorophyll A/B binding protein, protochlorophyllide reductase, rRNA, etc. It also controls the expression of its own gene(s) in a negative feedback fashion. The polypeptide is Phytochrome 2 (PHY2) (Ceratodon purpureus (Fire moss)).